We begin with the raw amino-acid sequence, 120 residues long: Ribonuclease P protein component 2 (120 aa).

This sequence belongs to the eukaryotic/archaeal RNase P protein component 2 family. In terms of assembly, homodimer in solution. Component of RNase P which consists of a catalytic RNA component and at least 5 protein subunits. Forms a heterotetrameric subcomplex with Rnp3. Reconstituted enzyme missing individual protein subunits is suboptimally active, showing each subunit contributes to optimization of activity.

It localises to the cytoplasm. It carries out the reaction Endonucleolytic cleavage of RNA, removing 5'-extranucleotides from tRNA precursor.. Its function is as follows. Part of ribonuclease P, a protein complex that generates mature tRNA molecules by cleaving their 5'-ends. The protein is Ribonuclease P protein component 2 of Pyrococcus horikoshii (strain ATCC 700860 / DSM 12428 / JCM 9974 / NBRC 100139 / OT-3).